A 109-amino-acid polypeptide reads, in one-letter code: Nucleoid-associated protein APL_0075 (109 aa).

Residues 1-21 form a disordered region; it reads MFGKGGLGGLMKQAQQMQERM. Low complexity predominate over residues 10-19; that stretch reads LMKQAQQMQE.

The protein belongs to the YbaB/EbfC family. As to quaternary structure, homodimer.

It is found in the cytoplasm. The protein localises to the nucleoid. In terms of biological role, binds to DNA and alters its conformation. May be involved in regulation of gene expression, nucleoid organization and DNA protection. The chain is Nucleoid-associated protein APL_0075 from Actinobacillus pleuropneumoniae serotype 5b (strain L20).